The primary structure comprises 316 residues: uncharacterized protein (316 aa).

The disordered stretch occupies residues 285-316; sequence APEGDLGDIIEVDPSEPRSDPYRRLRTPPPGG. The span at 289–298 shows a compositional bias: acidic residues; that stretch reads DLGDIIEVDP.

Functionally, possibly necessary for replication. This is an uncharacterized protein from Halobacterium salinarum (Halobacterium halobium).